A 336-amino-acid polypeptide reads, in one-letter code: Holliday junction branch migration complex subunit RuvB (336 aa).

A large ATPase domain (RuvB-L) region spans residues 4–184; it reads SDRLISSQSI…FGIVQRLEYY (181 aa). ATP-binding positions include Ile23, Arg24, Gly65, Lys68, Thr69, Thr70, 131–133, Arg174, Tyr184, and Arg221; that span reads EDY. Thr69 is a binding site for Mg(2+). A small ATPAse domain (RuvB-S) region spans residues 185 to 255; sequence SVDSLTQIVA…MAQQALEMLE (71 aa). The head domain (RuvB-H) stretch occupies residues 258 to 336; it reads QHGFDLMDRK…HFGFSAIEQE (79 aa). Arg313 and Arg318 together coordinate DNA.

Belongs to the RuvB family. In terms of assembly, homohexamer. Forms an RuvA(8)-RuvB(12)-Holliday junction (HJ) complex. HJ DNA is sandwiched between 2 RuvA tetramers; dsDNA enters through RuvA and exits via RuvB. An RuvB hexamer assembles on each DNA strand where it exits the tetramer. Each RuvB hexamer is contacted by two RuvA subunits (via domain III) on 2 adjacent RuvB subunits; this complex drives branch migration. In the full resolvosome a probable DNA-RuvA(4)-RuvB(12)-RuvC(2) complex forms which resolves the HJ.

It localises to the cytoplasm. The enzyme catalyses ATP + H2O = ADP + phosphate + H(+). Its function is as follows. The RuvA-RuvB-RuvC complex processes Holliday junction (HJ) DNA during genetic recombination and DNA repair, while the RuvA-RuvB complex plays an important role in the rescue of blocked DNA replication forks via replication fork reversal (RFR). RuvA specifically binds to HJ cruciform DNA, conferring on it an open structure. The RuvB hexamer acts as an ATP-dependent pump, pulling dsDNA into and through the RuvAB complex. RuvB forms 2 homohexamers on either side of HJ DNA bound by 1 or 2 RuvA tetramers; 4 subunits per hexamer contact DNA at a time. Coordinated motions by a converter formed by DNA-disengaged RuvB subunits stimulates ATP hydrolysis and nucleotide exchange. Immobilization of the converter enables RuvB to convert the ATP-contained energy into a lever motion, pulling 2 nucleotides of DNA out of the RuvA tetramer per ATP hydrolyzed, thus driving DNA branch migration. The RuvB motors rotate together with the DNA substrate, which together with the progressing nucleotide cycle form the mechanistic basis for DNA recombination by continuous HJ branch migration. Branch migration allows RuvC to scan DNA until it finds its consensus sequence, where it cleaves and resolves cruciform DNA. In Legionella pneumophila subsp. pneumophila (strain Philadelphia 1 / ATCC 33152 / DSM 7513), this protein is Holliday junction branch migration complex subunit RuvB.